An 873-amino-acid polypeptide reads, in one-letter code: Sine oculis-binding protein homolog (873 aa).

Residues 1 to 14 (MAEMEKEGRPPENK) are compositionally biased toward basic and acidic residues. The segment at 1-26 (MAEMEKEGRPPENKRSRKPAHPVKRE) is disordered. FCS-type zinc fingers lie at residues 142 to 180 (DDVSNVQIMCAWCQKVGIKRYSLSMGSEVKCFCSEKCFA) and 216 to 256 (FKNN…KCLN). Disordered stretches follow at residues 307–338 (ARRKAPSPASAAGQIQGPGPSASTTASPSDTA), 413–485 (RGPP…GAPL), 550–608 (KPPS…NQAQ), 742–766 (STEGSKNPEPPQDPKKPQPPEELAV), and 779–811 (SNCHLEGDTGKKAGEEPLAGGDKQDPNLNNPAD). The span at 312–338 (PSPASAAGQIQGPGPSASTTASPSDTA) shows a compositional bias: low complexity. A compositionally biased stretch (pro residues) spans 460–485 (IHPPTTPTMPGNPPGLLPPPPPGAPL). The span at 554–570 (GFSSNGENFIPSNSSET) shows a compositional bias: polar residues. Residues 571-603 (PGGKPPNSSSSPRESKQGSSKPSDSSPSCSGQS) show a composition bias toward low complexity. Over residues 783-793 (LEGDTGKKAGE) the composition is skewed to basic and acidic residues.

This sequence belongs to the SOBP family.

Functionally, implicated in development of the cochlea. The protein is Sine oculis-binding protein homolog of Gallus gallus (Chicken).